Consider the following 337-residue polypeptide: Equatorin (337 aa).

A signal peptide spans 1-20 (MDFILLIILSGVFLPDIISL). At 21–183 (QPIVGQEPGV…LSELEEIKLK (163 aa)) the chain is on the lumenal side. Residues 110-130 (SKPTASGEEEKPSESSRKTST) form a disordered region. The segment covering 117-126 (EEEKPSESSR) has biased composition (basic and acidic residues). A glycan (N-linked (GlcNAc...) asparagine) is linked at Asn145. The chain crosses the membrane as a helical span at residues 184–204 (LMLGISLMTLVLLIPLLIFCF). Residues 205–337 (ATLYKLRHLR…LLNKEGSPSN (133 aa)) lie on the Cytoplasmic side of the membrane. The tract at residues 259 to 283 (SSEMRRSRTRRSKSKPMDFSAGSNQ) is disordered. Ser336 carries the post-translational modification Phosphoserine.

In terms of assembly, interacts with SNAP25. In terms of processing, highly N- and O-glycosylated; contains sialic acid. MN9 epitope is O-glycosylated. In terms of tissue distribution, sperm specific, including germ cells (at protein level).

The protein localises to the cytoplasmic vesicle. The protein resides in the secretory vesicle. It localises to the acrosome membrane. It is found in the acrosome inner membrane. Its subcellular location is the acrosome outer membrane. The protein localises to the nucleus. The protein resides in the cytoplasm. Functionally, acrosomal membrane-anchored protein involved in the process of fertilization and in acrosome biogenesis. The chain is Equatorin (Eqtn) from Mus musculus (Mouse).